The chain runs to 416 residues: Notoamide biosynthesis cluster protein N' (416 aa).

The first 16 residues, 1–16 (MRAALLTLAFTALAAA), serve as a signal peptide directing secretion. Residues N119 and N262 are each glycosylated (N-linked (GlcNAc...) asparagine).

Functionally, part of the gene cluster that mediates the biosynthesis of notoamide, a fungal indole alkaloid that belongs to a family of natural products containing a characteristic bicyclo[2.2.2]diazaoctane core. The first step of notoamide biosynthesis involves coupling of L-proline and L-tryptophan by the bimodular NRPS notE', to produce cyclo-L-tryptophan-L-proline called brevianamide F. The reverse prenyltransferase notF' then acts as a deoxybrevianamide E synthase and converts brevianamide F to deoxybrevianamide E via reverse prenylation at C-2 of the indole ring leading to the bicyclo[2.2.2]diazaoctane core. Deoxybrevianamide E is further hydroxylated at C-6 of the indole ring, likely catalyzed by the cytochrome P450 monooxygenase notG', to yield 6-hydroxy-deoxybrevianamide E. 6-hydroxy-deoxybrevianamide E is a specific substrate of the prenyltransferase notC' for normal prenylation at C-7 to produce 6-hydroxy-7-prenyl-deoxybrevianamide, also called notoamide S. As the proposed pivotal branching point in notoamide biosynthesis, notoamide S can be diverted to notoamide E through an oxidative pyran ring closure putatively catalyzed by either notH' cytochrome P450 monooxygenase or the notD' FAD-linked oxidoreductase. This step would be followed by an indole 2,3-epoxidation-initiated pinacol-like rearrangement catalyzed by the notB' FAD-dependent monooxygenase leading to the formation of notoamide C and notoamide D. On the other hand notoamide S is converted to notoamide T by notH' (or notD'), a bifunctional oxidase that also functions as the intramolecular Diels-Alderase responsible for generation of (-)-notoamide T. To generate antipodal (+)-notoaminide T, notH (or notD) in Aspergillus strain MF297-2 is expected to catalyze a Diels-Alder reaction leading to the opposite stereochemistry. The remaining oxidoreductase notD' (or notH') likely catalyzes the oxidative pyran ring formation to yield (-)-stephacidin A. The FAD-dependent monooxygenase notI' is highly similar to notB' and is predicted to catalyze a similar conversion from (-)-stephacidin A to (+)-notoamide B via the 2,3-epoxidation of (-)-stephacidin A followed by a pinacol-type rearrangement. Finally, it remains unclear which enzyme could be responsible for the final hydroxylation steps leading to notoamide A and sclerotiamide. The function of notN' in the notoamide biosynthesis has not been determined yet. The sequence is that of Notoamide biosynthesis cluster protein N' from Aspergillus versicolor.